Reading from the N-terminus, the 813-residue chain is Cadherin-22 (813 aa).

The first 33 residues, 1 to 33, serve as a signal peptide directing secretion; it reads MRPRPEGALRAGAALSPVLLFLLLLPLLGHLWA. Residues 34–621 are Extracellular-facing; it reads ASTPAPSSLS…AFVMAASLSP (588 aa). 5 Cadherin domains span residues 61–165, 166–274, 275–391, 392–495, and 496–613; these read WVWN…EPRF, LHGP…PPRF, PQKM…PPEF, RPPS…NPPE, and LATP…TTAF. The N-linked (GlcNAc...) asparagine glycan is linked to N159. N463 and N609 each carry an N-linked (GlcNAc...) asparagine glycan. A helical membrane pass occupies residues 622-642; that stretch reads GALIALLVCVLILVVLALLIL. Topologically, residues 643–813 are cytoplasmic; the sequence is TLRRHHKSHL…HRGDDEAPAS (171 aa). The disordered stretch occupies residues 696–726; the sequence is GGDPGGGAASPPQAASSSERHSLPRGPSSPE.

In terms of tissue distribution, predominantly expressed in brain. Abundant in olfactory bulb, cerebrum, and cerebellum, less in pons, medulla, and spinal cord. Low expression in heart. No expression in lung, liver, spleen, kidney, testis, stomach, intestine, colon, and placenta.

The protein localises to the cell membrane. Its function is as follows. Cadherins are calcium-dependent cell adhesion proteins. They preferentially interact with themselves in a homophilic manner in connecting cells; cadherins may thus contribute to the sorting of heterogeneous cell types. PB-cadherins may have a role in the morphological organization of pituitary gland and brain tissues. The protein is Cadherin-22 (Cdh22) of Mus musculus (Mouse).